A 230-amino-acid chain; its full sequence is Orotidine 5'-phosphate decarboxylase (230 aa).

Residues D16, K38, 65–74 (DLKLHDIGNT), T119, R180, Q189, G209, and R210 each bind substrate. The active-site Proton donor is K67.

Belongs to the OMP decarboxylase family. Type 1 subfamily. As to quaternary structure, homodimer.

It catalyses the reaction orotidine 5'-phosphate + H(+) = UMP + CO2. It functions in the pathway pyrimidine metabolism; UMP biosynthesis via de novo pathway; UMP from orotate: step 2/2. Its function is as follows. Catalyzes the decarboxylation of orotidine 5'-monophosphate (OMP) to uridine 5'-monophosphate (UMP). In Methylobacterium radiotolerans (strain ATCC 27329 / DSM 1819 / JCM 2831 / NBRC 15690 / NCIMB 10815 / 0-1), this protein is Orotidine 5'-phosphate decarboxylase.